Consider the following 440-residue polypeptide: Acyltransferase Pun1 (440 aa).

Active-site proton acceptor residues include His-169 and Asp-384.

The protein belongs to the plant acyltransferase family.

It catalyses the reaction vanillylamine + (6E)-8-methylnon-6-enoyl-CoA = capsaicin + CoA + H(+). The catalysed reaction is (6E)-8-methylnon-6-enoyl-CoA + 4-hydroxy-3-methoxy-benzenemethanol = capsiate + CoA. In terms of biological role, involved in the biosynthesis of capsaicinoids and capsinoids natural products, pungent alkaloids synthesized from phenylpropanoid intermediates in the placental tissue of chili pepper fruit acting as repellant on herbivorous mammals and conferring spiciness to hot peppers. Catalyzes the biosynthesis of capsaicin, a pungent component, and of capsiate, a non-pungent component, from vanillylamine and vanillyl alcohol, respectively. Can transfer an acyl from 8-methylnon-6-enoyl-CoA to vanillylamine forming capsaicin and CoA. The chain is Acyltransferase Pun1 from Capsicum frutescens (Cayenne pepper).